The following is a 278-amino-acid chain: Polyamine aminopropyltransferase (278 aa).

The 238-residue stretch at 3-240 folds into the PABS domain; it reads EGWFTEAVED…GWWSATLMVN (238 aa). Position 33 (Gln33) interacts with S-methyl-5'-thioadenosine. Spermidine is bound by residues His64 and Asp88. Residues Glu108 and 139-140 contribute to the S-methyl-5'-thioadenosine site; that span reads DG. Residue Asp158 is the Proton acceptor of the active site. 158-161 is a spermidine binding site; that stretch reads DSTD. Pro165 contributes to the S-methyl-5'-thioadenosine binding site.

It belongs to the spermidine/spermine synthase family. Homodimer or homotetramer.

The protein resides in the cytoplasm. The enzyme catalyses S-adenosyl 3-(methylsulfanyl)propylamine + putrescine = S-methyl-5'-thioadenosine + spermidine + H(+). It participates in amine and polyamine biosynthesis; spermidine biosynthesis; spermidine from putrescine: step 1/1. Catalyzes the irreversible transfer of a propylamine group from the amino donor S-adenosylmethioninamine (decarboxy-AdoMet) to putrescine (1,4-diaminobutane) to yield spermidine. In Halorhodospira halophila (strain DSM 244 / SL1) (Ectothiorhodospira halophila (strain DSM 244 / SL1)), this protein is Polyamine aminopropyltransferase.